The primary structure comprises 2104 residues: 5'-3' DNA helicase ZGRF1 (2104 aa).

The segment covering 335-345 (SSPIHSSTVDG) has biased composition (polar residues). The tract at residues 335-359 (SSPIHSSTVDGNDTERKPKAQEDDV) is disordered. Residue Ser336 is modified to Phosphoserine. Residues 347–356 (DTERKPKAQE) show a composition bias toward basic and acidic residues. Phosphoserine occurs at positions 793 and 864. Cys1349, His1351, Cys1374, and Cys1382 together coordinate Zn(2+). A GRF-type zinc finger spans residues 1349–1391 (CHHSQPAKLVMVKKEGPNKGRLFYTCDGPKADRCKFFKWLEDV). The tract at residues 2085 to 2104 (VEEKQKKKSEKEKSKDKSHS) is disordered.

In terms of assembly, interacts with DNA repair protein RAD51; the interaction promotes RAD51 strand exchange activity. Also interacts with DNA repair proteins EXO1 and BRCA1; the interactions are increased following DNA damage induction.

The protein localises to the nucleus. It carries out the reaction ATP + H2O = ADP + phosphate + H(+). The catalysed reaction is Couples ATP hydrolysis with the unwinding of duplex DNA at the replication fork by translocating in the 5'-3' direction. This creates two antiparallel DNA single strands (ssDNA). The leading ssDNA polymer is the template for DNA polymerase III holoenzyme which synthesizes a continuous strand.. 5'-3' DNA helicase which is recruited to sites of DNA damage and promotes repair of replication-blocking DNA lesions through stimulation of homologous recombination (HR). Promotes HR by directly stimulating RAD51-mediated strand exchange activity. Not required to load RAD51 at sites of DNA damage but promotes recombinational repair after RAD51 recruitment. Also promotes HR by positively regulating EXO1-mediated DNA end resection of double-strand breaks. Required for recruitment of replication protein RPA2 to DNA damage sites. Promotes the initiation of the G2/M checkpoint but not its maintenance. Catalyzes Holliday junction branch migration and dissociation of D-loops and DNA flaps. The polypeptide is 5'-3' DNA helicase ZGRF1 (ZGRF1) (Homo sapiens (Human)).